We begin with the raw amino-acid sequence, 139 residues long: Probable cytochrome b5 (139 aa).

One can recognise a Cytochrome b5 heme-binding domain in the interval 2 to 78 (SAEFTYQDVA…LEPLLVGTLK (77 aa)). Histidine 37 and histidine 61 together coordinate heme. Residues 105–125 (GLGIGLYAVLVLGGLAGFAAY) form a helical membrane-spanning segment.

The protein belongs to the cytochrome b5 family.

It is found in the endoplasmic reticulum membrane. The protein resides in the microsome membrane. Membrane bound hemoprotein which function as an electron carrier for several membrane bound oxygenases. The polypeptide is Probable cytochrome b5 (Neurospora crassa (strain ATCC 24698 / 74-OR23-1A / CBS 708.71 / DSM 1257 / FGSC 987)).